A 340-amino-acid polypeptide reads, in one-letter code: tRNA dimethylallyltransferase (340 aa).

A disordered region spans residues 1-25 (MDQNRSPNGRDCREPPSPSSTARPG). 31–38 (GPTATGKS) lines the ATP pocket. Residue 33-38 (TATGKS) coordinates substrate. Positions 56 to 59 (DSRQ) are interaction with substrate tRNA.

Belongs to the IPP transferase family. Monomer. The cofactor is Mg(2+).

It catalyses the reaction adenosine(37) in tRNA + dimethylallyl diphosphate = N(6)-dimethylallyladenosine(37) in tRNA + diphosphate. Its function is as follows. Catalyzes the transfer of a dimethylallyl group onto the adenine at position 37 in tRNAs that read codons beginning with uridine, leading to the formation of N6-(dimethylallyl)adenosine (i(6)A). This is tRNA dimethylallyltransferase from Synechococcus sp. (strain JA-3-3Ab) (Cyanobacteria bacterium Yellowstone A-Prime).